We begin with the raw amino-acid sequence, 705 residues long: MLRNFLKSRFLAPRGMSCFSQVMNPITGQNSWQERGDDYDYHLEVANAGFGDMLHDWERNQKYFAALRKTIAGMREAGREVHVLDIGTGTGILSMMALAAGADSVTACEAFLPMANCAEKILAANGAGDKVRLIRKRSTEIQVGEDMPRKANLLVAELLDTELIGEGAIGIYNHAHAELLTEDALCIPARARCYAQVAQSPLAAQWNSLKTIANLDGEPLLHPPEQLKSCQGEAALHDVQLSQLPSSAFRPLTDPVEIFQFDFQRKQEREKQRAQLLKLQSKQPGAAELVFYWWDIQLDDGGEILLSCAPYWAHPQLKELAAEKAKDHPLPNVVPWRDHWMQAIYYIPKPLQLLEAGKSFHLSCHHDEYSLWFDAREEAPTKSVRRHTCTCDLHMTYSRSRIGQLNQSPRNKRYLRYLEESIEAEKSNVLVLGNGCLLGLASSALGAASVLLHEPHRFSRRLLESIVKHNQLKNVHFLDKVEELEDSQLAALTHIFAEPYFLNAILPWDNFYFGTLLTKIKDKLPEGVKILPCSARIYALPVEFLDLHKIRAPVGSCEGFDLRLFDEMVERSAEQAVSLVEAQPLWEYPCRALSEPQEVLSVDFSNFGQEHSLKGSIELKHTGICNGVALWVDWKLVEDNSPRSIVSSGPSEPVVPGEFVKWDMFVRQGVHFPRKPKDAVTHLEWSTDFKPLLGELNFSFGQKKL.

2 consecutive SAM-dependent MTase PRMT-type domains span residues 29 to 372 (QNSW…YSLW) and 381 to 705 (TKSV…QKKL).

Belongs to the class I-like SAM-binding methyltransferase superfamily. Protein arginine N-methyltransferase family. PRMT7 subfamily.

Functionally, essential arginine methyltransferase that can both catalyze the formation of omega-N monomethylarginine (MMA) and symmetrical dimethylarginine (sDMA). Specifically mediates the symmetrical dimethylation of arginine residues in the small nuclear ribonucleoproteins SmD1 and SmD3. This chain is Protein arginine N-methyltransferase 7 (Art7), found in Drosophila simulans (Fruit fly).